A 462-amino-acid polypeptide reads, in one-letter code: Coagulation factor IX (462 aa).

The N-terminal stretch at 1–21 (MADAPGLIPIFLLGYLLSTEC) is a signal peptide. A propeptide spanning residues 22–39 (AVFLDRENATKILTRPKR) is cleaved from the precursor. Ca(2+) contacts are provided by Tyr-40, Asn-41, Glu-46, Glu-47, Glu-54, Glu-56, Glu-59, Glu-60, Glu-65, Glu-66, and Glu-69. The Gla domain maps to 40 to 86 (YNSGKLEEFVQGNLERECIEERCSFEEAREVFENTEKTTEFWKQYVD). A 4-carboxyglutamate mark is found at Glu-46, Glu-47, Glu-54, Glu-56, Glu-59, Glu-60, Glu-65, Glu-66, Glu-69, Glu-72, and Glu-75. Glu-54 lines the Mg(2+) pocket. Residues Cys-57 and Cys-62 are joined by a disulfide bond. Glu-59 is a binding site for Mg(2+). Glu-65 contributes to the Mg(2+) binding site. Glu-69 provides a ligand contact to Mg(2+). Glu-75 serves as a coordination point for Ca(2+). Glu-75 is a binding site for Mg(2+). Thr-78 carries an O-linked (GalNAc...) threonine glycan. 4 residues coordinate Ca(2+): Glu-79, Asp-86, Gly-87, and Gln-89. Glu-79 bears the 4-carboxyglutamate mark. Position 79 (Glu-79) interacts with Mg(2+). Residues 86-122 (DGDQCESNPCLNGGICKDDINSYECWCQAGFEGRNCE) enclose the EGF-like; calcium-binding domain. 10 disulfides stabilise this stretch: Cys-90–Cys-101, Cys-95–Cys-110, Cys-112–Cys-121, Cys-127–Cys-138, Cys-134–Cys-148, Cys-150–Cys-163, Cys-171–Cys-336, Cys-253–Cys-269, Cys-383–Cys-397, and Cys-408–Cys-436. The O-linked (Glc...) serine glycan is linked to Ser-92. Ca(2+) is bound by residues Asp-103 and Asp-104. (3R)-3-hydroxyaspartate is present on Asp-103. Ser-107 carries the post-translational modification Phosphoserine. Positions 186-227 (AETVFSNTDYGNSTELILDDITNSTILDNLTENSEPINDFTR) are cleaved as a propeptide — activation peptide. Residue Tyr-195 is modified to Sulfotyrosine. At Ser-198 the chain carries Phosphoserine. Position 199 is a phosphothreonine; alternate (Thr-199). Residue Thr-199 is glycosylated (O-linked (GalNAc...) threonine; alternate). 2 N-linked (GlcNAc...) asparagine glycosylation sites follow: Asn-208 and Asn-214. O-linked (GalNAc...) threonine glycans are attached at residues Thr-216 and Thr-226. The Peptidase S1 domain maps to 228-460 (VVGGENAKPG…YVNWIKEKTK (233 aa)). The active-site Charge relay system is His-268. Positions 282, 284, 287, 289, and 292 each coordinate Ca(2+). N-linked (GlcNAc...) asparagine glycosylation occurs at Asn-307. The active-site Charge relay system is the Asp-316. Residue Ser-412 is the Charge relay system of the active site.

Belongs to the peptidase S1 family. In terms of assembly, heterodimer of a light chain and a heavy chain; disulfide-linked. Interacts (inactive and activated) with F11 (activated) in calcium-dependent manner. Interacts with SERPINC1. Interacts (inactive and activated) with nitrophorin-2, an anticoagulant protein from Rhodnius prolixus. Activated by factor XIa, which excises the activation peptide. The propeptide can also be removed by snake venom protease. Activated by coagulation factor VIIa-tissue factor (F7-F3) complex in calcium-dependent manner. In terms of processing, the iron and 2-oxoglutarate dependent 3-hydroxylation of aspartate and asparagine is (R) stereospecific within EGF domains. Post-translationally, predominantly O-glucosylated at Ser-92 by POGLUT1 in vitro.

The protein localises to the secreted. It carries out the reaction Selective cleavage of Arg-|-Ile bond in factor X to form factor Xa.. Factor IX is a vitamin K-dependent plasma protein that participates in the intrinsic pathway of blood coagulation by converting factor X to its active form in the presence of Ca(2+) ions, phospholipids, and factor VIIIa. The polypeptide is Coagulation factor IX (F9) (Rattus norvegicus (Rat)).